A 451-amino-acid chain; its full sequence is Protein naked cuticle homolog 2 (451 aa).

Residues 1 to 108 are disordered; that stretch reads MGKLQSKHAA…PRGPGGQRLN (108 aa). Gly-2 carries the N-myristoyl glycine lipid modification. The segment at 2 to 173 is targeting to the basolateral cell membrane; the sequence is GKLQSKHAAA…GSSKTLRVKL (172 aa). Composition is skewed to basic and acidic residues over residues 34 to 63 and 89 to 99; these read KGAE…REDQ and DGERAANREGP. An interaction with DVL1, DVL2 and DVL3 region spans residues 113–178; it reads QCDVSVEEDD…LRVKLTVSPE (66 aa). The region spanning 119–154 is the EF-hand domain; that stretch reads EEDDRQEWTFTLYDFDNCGKVTREDMSSLMHTIYEV. Positions 132, 134, 138, and 143 each coordinate Ca(2+). Disordered stretches follow at residues 162–237 and 256–408; these read SSGS…PYCV and YTSR…TVEH. The span at 180-215 shows a compositional bias: basic and acidic residues; sequence SSKRKEGPPAGQDREPTRCRMEGELAEEPRVADRRL. The segment at 300–385 is interaction with TGFA; the sequence is QVLVEHVVPA…PPPPYGHKRY (86 aa). The segment covering 332–351 has biased composition (low complexity); it reads KSPKGSGKPPGVPASSKSGK.

Belongs to the NKD family. Interacts with DVL1, DVL2, DVL3 and PPP2R3A. Interacts with RNF25 and TGFA (via cytoplasmic domain). Ubiquitinated, leading to rapid proteasomal degradation. Interaction with TGFA interferes with RNF25 binding and protects against ubiquitination mediated by RNF25. Expressed in kidney, lung, pancreas and spleen.

It is found in the cell membrane. The protein resides in the cytoplasm. It localises to the cytoplasmic vesicle. In terms of biological role, cell autonomous antagonist of the canonical Wnt signaling pathway. May activate a second Wnt signaling pathway that controls planar cell polarity. Required for processing of TGFA and for targeting of TGFA to the basolateral membrane of polarized epithelial cells. The chain is Protein naked cuticle homolog 2 (NKD2) from Homo sapiens (Human).